Consider the following 176-residue polypeptide: Flavodoxin-like domain-containing protein BilS (176 aa).

The protein operates within porphyrin-containing compound metabolism; protoheme degradation. Functionally, together with BilR, catalyzes reduction of mesobilirubin and/or bilirubin to urobilinogen, a key step during heme degradation. BilS is probably involved in electron transfer for the bilirubin reductase BilR. The chain is Flavodoxin-like domain-containing protein BilS from Clostridioides difficile (strain CD3).